Here is a 344-residue protein sequence, read N- to C-terminus: C5a anaphylatoxin chemotactic receptor 2 (344 aa).

The Extracellular segment spans residues 1-44; that stretch reads MMNHTTSEYYDYEYDHEHYSDLPDVPVDCPAGTCFTSDVYLIVL. The N-linked (GlcNAc...) asparagine glycan is linked to asparagine 3. A helical transmembrane segment spans residues 45 to 67; it reads LVLYAAVFLVGVPGNTLVAWVTW. At 68–78 the chain is on the cytoplasmic side; it reads KESRHRLGASW. A helical membrane pass occupies residues 79–101; that stretch reads FLHLTMADLLCCVSLPFLAVPIA. The Extracellular portion of the chain corresponds to 102–120; sequence QKGHWPYGAAGCWLLSSIT. Cysteine 113 and cysteine 192 are joined by a disulfide. The chain crosses the membrane as a helical span at residues 121-143; that stretch reads ILSMYASVLLLTGLSGDLFLLAF. Residues 144–155 are Cytoplasmic-facing; it reads RPSWKGADHRTF. The chain crosses the membrane as a helical span at residues 156-178; it reads GVRVVQASSWMLGLLLTVPSAVY. The Extracellular portion of the chain corresponds to 179-208; that stretch reads RRLLQEHYPPRLVCGIDYGGSVSAEVAITT. A helical transmembrane segment spans residues 209–231; the sequence is VRFLFGFLGPLVFMAGCHGILQR. At 232 to 243 the chain is on the cytoplasmic side; sequence QMARRHWPLGTA. The helical transmembrane segment at 244 to 266 threads the bilayer; that stretch reads VVVGFFICWTPYHVLRVIIAAAP. The Extracellular segment spans residues 267–280; the sequence is PHSLLLARVLEAEP. A helical transmembrane segment spans residues 281 to 300; the sequence is LFNGLALAHSALNPIMFLYF. The Cytoplasmic segment spans residues 301-344; the sequence is GRKQLCKSLQAACHWALRDPQDEESAVTKVSISTSHEMVSEMPV. Position 325 is a phosphoserine (serine 325).

Belongs to the G-protein coupled receptor 1 family. In terms of assembly, interacts with C3 (the anaphylatoxin peptide C3a and the adipogenic hormone ASP); the interaction occurs with higher affinity for ASP, enhancing the phosphorylation and activation of GPR77, recruitment of ARRB2 to the cell surface and endocytosis of GRP77. Highly expressed in liver and spleen. Lower levels in intestine, brain and kidney. Also expressed in adipose tissues with highest levels in gonadal and ingual fat depots. Lower levels in brown tissue.

Its subcellular location is the cell membrane. Functionally, receptor for the chemotactic and inflammatory C3a, C4a and C5a anaphylatoxin peptides and also for their dearginated forms ASP/C3adesArg, C4adesArg and C5adesArg respectively. Couples weakly to G(i)-mediated signaling pathways. This is C5a anaphylatoxin chemotactic receptor 2 (C5ar2) from Mus musculus (Mouse).